The chain runs to 924 residues: Exocyst complex component 2 (924 aa).

Residues 8–93 (PLVTGISPNE…GTSTVSFKLL (86 aa)) form the IPT/TIG domain. Residues 240–260 (QKLENVLNRASNTADTLFQEV) are a coiled coil. Phosphoserine is present on residues S431, S432, and S435. T440 is subject to Phosphothreonine. The residue at position 454 (K454) is an N6-acetyllysine. A Phosphoserine modification is found at S888.

Belongs to the SEC5 family. In terms of assembly, the exocyst complex is composed of EXOC1, EXOC2, EXOC3, EXOC4, EXOC5, EXOC6, EXOC7 and EXOC8. Interacts with EXOC3L1. Interacts with GNEFR/DELGEF; this interaction occurs only in the presence of magnesium or manganese and is stimulated by dCTP or GTP. Interacts with RALA and RALB. Interacts with ARL13B; regulates ARL13B localization to the cilium membrane. Widely expressed with highest levels in brain and placenta.

The protein resides in the midbody. It is found in the midbody ring. Its function is as follows. Component of the exocyst complex involved in the docking of exocytic vesicles with fusion sites on the plasma membrane. This Homo sapiens (Human) protein is Exocyst complex component 2 (EXOC2).